The chain runs to 361 residues: D-malate dehydrogenase [decarboxylating] (361 aa).

D224, D248, and D252 together coordinate Mn(2+).

It belongs to the isocitrate and isopropylmalate dehydrogenases family. Mg(2+) serves as cofactor. Mn(2+) is required as a cofactor.

The protein localises to the cytoplasm. It catalyses the reaction (R)-malate + NAD(+) = pyruvate + CO2 + NADH. Catalyzes the NAD(+)-dependent oxidative decarboxylation of D-malate into pyruvate. Is essential for aerobic growth on D-malate as the sole carbon source. But is not required for anaerobic D-malate utilization, although DmlA is expressed and active in those conditions. Appears to be not able to use L-tartrate as a substrate for dehydrogenation instead of D-malate. The chain is D-malate dehydrogenase [decarboxylating] (dmlA) from Escherichia coli (strain K12).